The primary structure comprises 149 residues: Transcriptional repressor NrdR (149 aa).

Residues 3–34 fold into a zinc finger; that stretch reads CPFCSTEETKVIDSRLVSDGYQVRRRRECTKC. The region spanning 49–139 is the ATP-cone domain; it reads PKIIKNNGMR…VYLSFENINE (91 aa).

It belongs to the NrdR family. Zn(2+) is required as a cofactor.

Negatively regulates transcription of bacterial ribonucleotide reductase nrd genes and operons by binding to NrdR-boxes. In Mannheimia succiniciproducens (strain KCTC 0769BP / MBEL55E), this protein is Transcriptional repressor NrdR.